The following is a 117-amino-acid chain: Chondroitin proteoglycan 7 (117 aa).

The N-terminal stretch at 1 to 19 (MQTITLLALLACIAVPIFA) is a signal peptide. Positions 31–97 (VEASGEGSGE…SGENLSNGIV (67 aa)) are disordered. Low complexity-rich tracts occupy residues 32-41 (EASGEGSGES) and 48-57 (ESSGEGSGES). 5 O-linked (Xyl...) (chondroitin sulfate) serine glycosylation sites follow: Ser-66, Ser-70, Ser-74, Ser-84, and Ser-88. Positions 75–95 (GASDAVLESSGEGSGENLSNG) are enriched in low complexity. The N-linked (GlcNAc...) asparagine glycan is linked to Asn-91.

The polypeptide is Chondroitin proteoglycan 7 (cpg-7) (Caenorhabditis briggsae).